The chain runs to 121 residues: Large ribosomal subunit protein eL18 (121 aa).

The protein belongs to the eukaryotic ribosomal protein eL18 family.

In Methanocaldococcus jannaschii (strain ATCC 43067 / DSM 2661 / JAL-1 / JCM 10045 / NBRC 100440) (Methanococcus jannaschii), this protein is Large ribosomal subunit protein eL18.